The chain runs to 199 residues: Large ribosomal subunit protein bL25 (199 aa).

This sequence belongs to the bacterial ribosomal protein bL25 family. CTC subfamily. As to quaternary structure, part of the 50S ribosomal subunit; part of the 5S rRNA/L5/L18/L25 subcomplex. Contacts the 5S rRNA. Binds to the 5S rRNA independently of L5 and L18.

Its function is as follows. This is one of the proteins that binds to the 5S RNA in the ribosome where it forms part of the central protuberance. The sequence is that of Large ribosomal subunit protein bL25 from Herpetosiphon aurantiacus (strain ATCC 23779 / DSM 785 / 114-95).